The chain runs to 359 residues: Biotin synthase (359 aa).

The interval 1–22 (MQSTPLNFVPNAAKAPVTPGQA) is disordered. A Radical SAM core domain is found at 58-285 (NAVQLSTLLS…KAMVRLSAGR (228 aa)). Residues cysteine 73, cysteine 77, and cysteine 80 each contribute to the [4Fe-4S] cluster site. [2Fe-2S] cluster-binding residues include cysteine 117, cysteine 148, cysteine 208, and arginine 280.

It belongs to the radical SAM superfamily. Biotin synthase family. In terms of assembly, homodimer. The cofactor is [4Fe-4S] cluster. [2Fe-2S] cluster serves as cofactor.

The enzyme catalyses (4R,5S)-dethiobiotin + (sulfur carrier)-SH + 2 reduced [2Fe-2S]-[ferredoxin] + 2 S-adenosyl-L-methionine = (sulfur carrier)-H + biotin + 2 5'-deoxyadenosine + 2 L-methionine + 2 oxidized [2Fe-2S]-[ferredoxin]. Its pathway is cofactor biosynthesis; biotin biosynthesis; biotin from 7,8-diaminononanoate: step 2/2. Its function is as follows. Catalyzes the conversion of dethiobiotin (DTB) to biotin by the insertion of a sulfur atom into dethiobiotin via a radical-based mechanism. The polypeptide is Biotin synthase (Ralstonia pickettii (strain 12J)).